The chain runs to 395 residues: Argininosuccinate synthase (395 aa).

8 to 16 (AYSGGLDTS) lines the ATP pocket. The L-citrulline site is built by Y86 and S91. G116 contributes to the ATP binding site. L-aspartate-binding residues include T118, N122, and D123. N122 lines the L-citrulline pocket. Residues R126, S172, S181, E257, and Y269 each coordinate L-citrulline.

The protein belongs to the argininosuccinate synthase family. Type 1 subfamily. As to quaternary structure, homotetramer.

It localises to the cytoplasm. The catalysed reaction is L-citrulline + L-aspartate + ATP = 2-(N(omega)-L-arginino)succinate + AMP + diphosphate + H(+). It participates in amino-acid biosynthesis; L-arginine biosynthesis; L-arginine from L-ornithine and carbamoyl phosphate: step 2/3. This chain is Argininosuccinate synthase, found in Methanosarcina barkeri (strain Fusaro / DSM 804).